Here is a 338-residue protein sequence, read N- to C-terminus: Phenylalanine--tRNA ligase alpha subunit (338 aa).

Glutamate 252 serves as a coordination point for Mg(2+).

This sequence belongs to the class-II aminoacyl-tRNA synthetase family. Phe-tRNA synthetase alpha subunit type 1 subfamily. As to quaternary structure, tetramer of two alpha and two beta subunits. Mg(2+) serves as cofactor.

It localises to the cytoplasm. It carries out the reaction tRNA(Phe) + L-phenylalanine + ATP = L-phenylalanyl-tRNA(Phe) + AMP + diphosphate + H(+). The chain is Phenylalanine--tRNA ligase alpha subunit from Pseudomonas fluorescens (strain ATCC BAA-477 / NRRL B-23932 / Pf-5).